An 83-amino-acid chain; its full sequence is RNA-binding protein Hfq (83 aa).

Residues 10–69 enclose the Sm domain; the sequence is DPFLNALRREHVPVSIYLVNGIKLQGQIESFDQYVVLLRNTVTQMVYKHAISTIVPGRAV.

Belongs to the Hfq family. In terms of assembly, homohexamer.

RNA chaperone that binds small regulatory RNA (sRNAs) and mRNAs to facilitate mRNA translational regulation in response to envelope stress, environmental stress and changes in metabolite concentrations. Also binds with high specificity to tRNAs. The protein is RNA-binding protein Hfq of Acidovorax ebreus (strain TPSY) (Diaphorobacter sp. (strain TPSY)).